The primary structure comprises 126 residues: Fluoride-specific ion channel FluC (126 aa).

The next 3 helical transmembrane spans lie at W35–L55, V71–F91, and L101–I121. Na(+) contacts are provided by G75 and T78.

It belongs to the fluoride channel Fluc/FEX (TC 1.A.43) family.

The protein resides in the cell inner membrane. It carries out the reaction fluoride(in) = fluoride(out). With respect to regulation, na(+) is not transported, but it plays an essential structural role and its presence is essential for fluoride channel function. Functionally, fluoride-specific ion channel. Important for reducing fluoride concentration in the cell, thus reducing its toxicity. The sequence is that of Fluoride-specific ion channel FluC from Sphingopyxis alaskensis (strain DSM 13593 / LMG 18877 / RB2256) (Sphingomonas alaskensis).